A 150-amino-acid polypeptide reads, in one-letter code: Histone H2B.2 (150 aa).

Over residues 1 to 16 (MAPKAEKKPAAKKPAE) the composition is skewed to basic and acidic residues. The segment at 1–57 (MAPKAEKKPAAKKPAEEEPAAEKAPAGKKPKAEKRVPAGKSAGKEGGEGKRGRKKGK) is disordered. 2 positions are modified to N6-acetyllysine: K7 and K34. Residue K146 forms a Glycyl lysine isopeptide (Lys-Gly) (interchain with G-Cter in ubiquitin) linkage.

This sequence belongs to the histone H2B family. In terms of assembly, the nucleosome is a histone octamer containing two molecules each of H2A, H2B, H3 and H4 assembled in one H3-H4 heterotetramer and two H2A-H2B heterodimers. The octamer wraps approximately 147 bp of DNA. In terms of processing, can be acetylated to form H2BK6ac and H2BK33ac. Monoubiquitinated to form H2BK143ub1; may give a specific tag for epigenetic transcriptional activation.

Its subcellular location is the nucleus. The protein resides in the chromosome. Its function is as follows. Core component of nucleosome. Nucleosomes wrap and compact DNA into chromatin, limiting DNA accessibility to the cellular machineries which require DNA as a template. Histones thereby play a central role in transcription regulation, DNA repair, DNA replication and chromosomal stability. DNA accessibility is regulated via a complex set of post-translational modifications of histones, also called histone code, and nucleosome remodeling. This chain is Histone H2B.2, found in Zea mays (Maize).